Reading from the N-terminus, the 170-residue chain is CDP-archaeol synthase (170 aa).

A run of 5 helical transmembrane segments spans residues 6–26 (LLWA…PVLV), 53–73 (GLIG…FITP), 83–103 (LLLA…GSFF), 114–134 (PAIG…AYPV), and 140–160 (GQII…NYFA).

This sequence belongs to the CDP-archaeol synthase family. Mg(2+) is required as a cofactor.

It is found in the cell membrane. It carries out the reaction 2,3-bis-O-(geranylgeranyl)-sn-glycerol 1-phosphate + CTP + H(+) = CDP-2,3-bis-O-(geranylgeranyl)-sn-glycerol + diphosphate. The protein operates within membrane lipid metabolism; glycerophospholipid metabolism. In terms of biological role, catalyzes the formation of CDP-2,3-bis-(O-geranylgeranyl)-sn-glycerol (CDP-archaeol) from 2,3-bis-(O-geranylgeranyl)-sn-glycerol 1-phosphate (DGGGP) and CTP. This reaction is the third ether-bond-formation step in the biosynthesis of archaeal membrane lipids. The sequence is that of CDP-archaeol synthase from Thermococcus onnurineus (strain NA1).